Consider the following 294-residue polypeptide: 3-methyl-2-oxobutanoate hydroxymethyltransferase 1 (294 aa).

Mg(2+) is bound at residue aspartate 55. 3-methyl-2-oxobutanoate is bound by residues 55–56 and lysine 123; that span reads DS. Glutamate 192 (proton acceptor) is an active-site residue.

This sequence belongs to the PanB family. As to quaternary structure, homodecamer; pentamer of dimers. Mg(2+) is required as a cofactor.

It is found in the cytoplasm. It catalyses the reaction 3-methyl-2-oxobutanoate + (6R)-5,10-methylene-5,6,7,8-tetrahydrofolate + H2O = 2-dehydropantoate + (6S)-5,6,7,8-tetrahydrofolate. It participates in cofactor biosynthesis; (R)-pantothenate biosynthesis; (R)-pantoate from 3-methyl-2-oxobutanoate: step 1/2. Its function is as follows. Catalyzes the reversible reaction in which hydroxymethyl group from 5,10-methylenetetrahydrofolate is transferred onto alpha-ketoisovalerate to form ketopantoate. The chain is 3-methyl-2-oxobutanoate hydroxymethyltransferase 1 from Methylibium petroleiphilum (strain ATCC BAA-1232 / LMG 22953 / PM1).